The sequence spans 157 residues: Ribosomal RNA large subunit methyltransferase H (157 aa).

S-adenosyl-L-methionine contacts are provided by residues L74, G106, and 125–130 (LGNITF).

The protein belongs to the RNA methyltransferase RlmH family. In terms of assembly, homodimer.

The protein resides in the cytoplasm. It carries out the reaction pseudouridine(1915) in 23S rRNA + S-adenosyl-L-methionine = N(3)-methylpseudouridine(1915) in 23S rRNA + S-adenosyl-L-homocysteine + H(+). In terms of biological role, specifically methylates the pseudouridine at position 1915 (m3Psi1915) in 23S rRNA. This is Ribosomal RNA large subunit methyltransferase H from Lawsonia intracellularis (strain PHE/MN1-00).